The primary structure comprises 446 residues: Glutamate-1-semialdehyde 2,1-aminomutase (446 aa).

K263 carries the post-translational modification N6-(pyridoxal phosphate)lysine.

It belongs to the class-III pyridoxal-phosphate-dependent aminotransferase family. HemL subfamily. Pyridoxal 5'-phosphate is required as a cofactor.

Its subcellular location is the cytoplasm. It catalyses the reaction (S)-4-amino-5-oxopentanoate = 5-aminolevulinate. It participates in porphyrin-containing compound metabolism; protoporphyrin-IX biosynthesis; 5-aminolevulinate from L-glutamyl-tRNA(Glu): step 2/2. The protein is Glutamate-1-semialdehyde 2,1-aminomutase of Haloquadratum walsbyi (strain DSM 16790 / HBSQ001).